Consider the following 227-residue polypeptide: Octanoyltransferase (227 aa).

The BPL/LPL catalytic domain occupies 35-222; the sequence is EAYENRIIMC…ELGRLLNEKK (188 aa). Residues 80 to 87, 152 to 154, and 165 to 167 contribute to the substrate site; these read RGGDITYH, AIG, and GLA. The active-site Acyl-thioester intermediate is the C183.

It belongs to the LipB family.

The protein localises to the cytoplasm. The catalysed reaction is octanoyl-[ACP] + L-lysyl-[protein] = N(6)-octanoyl-L-lysyl-[protein] + holo-[ACP] + H(+). The protein operates within protein modification; protein lipoylation via endogenous pathway; protein N(6)-(lipoyl)lysine from octanoyl-[acyl-carrier-protein]: step 1/2. Its function is as follows. Catalyzes the transfer of endogenously produced octanoic acid from octanoyl-acyl-carrier-protein onto the lipoyl domains of lipoate-dependent enzymes. Lipoyl-ACP can also act as a substrate although octanoyl-ACP is likely to be the physiological substrate. This chain is Octanoyltransferase, found in Bacteroides thetaiotaomicron (strain ATCC 29148 / DSM 2079 / JCM 5827 / CCUG 10774 / NCTC 10582 / VPI-5482 / E50).